We begin with the raw amino-acid sequence, 1906 residues long: Myosin light chain kinase, smooth muscle (1906 aa).

Ig-like C2-type domains are found at residues 28 to 117 and 156 to 244; these read PAFT…VELT and PKFA…AELT. Disordered stretches follow at residues 127–157 and 309–453; these read SLPS…SPPK and ETFY…SKVS. Residues 309–321 are compositionally biased toward basic and acidic residues; the sequence is ETFYTSREAKDGK. Composition is skewed to polar residues over residues 345–354 and 384–402; these read LQKTSSTITL and PLMT…QVSP. Residues 403 to 424 are compositionally biased toward basic and acidic residues; it reads RSRETENRAGVRKSVKEEKREP. 4 consecutive Ig-like C2-type domains span residues 429–517, 521–613, 637–725, and 735–830; these read PQFE…WLLT, PKVE…AQVT, PIFL…ATLT, and PWFI…SSAS. One copy of the IIA-1 repeat lies at 660–676; that stretch reads VSANPCPEIIWLHNGKE. Residues 660-1833 are 4 X repeats, motif IIA; the sequence is VSANPCPEII…EVMWYKDDQP (1174 aa). An IIB-1 repeat occupies 693 to 708; it reads SLYIQEVFPEDTGKYT. The tract at residues 693–1866 is 5 X repeats, motif IIB; it reads SLYIQEVFPE…VCGDDDAKYT (1174 aa). One copy of the IIA-2 repeat lies at 758-774; sequence IAGDPFPTVHWFKDGQE. The IIB-2 repeat unit spans residues 791–807; that stretch reads TLILRNVQSRHAGQYEI. Disordered stretches follow at residues 831-881 and 947-1086; these read RAEM…QEDV and PKTL…APSF. 2 stretches are compositionally biased toward basic and acidic residues: residues 833–850 and 867–881; these read EMLR…RRDG and SSSE…QEDV. An III-1 repeat occupies 970–987; it reads AKKGTPKTPLPEKVPPPK. The 4 X repeats, motif III stretch occupies residues 970-1226; the sequence is AKKGTPKTPL…TPPKAATPPQ (257 aa). Over residues 977–988 the composition is skewed to pro residues; sequence TPLPEKVPPPKP. An III-2 repeat occupies 999–1016; it reads AKKKPPAENGSASTPAPN. Positions 1039 to 1051 are enriched in basic and acidic residues; that stretch reads VKKEEKNDRKCEH. Residues 1061-1078 form an III-3 repeat; sequence IGKKAENKPAASKPTPPP. Ig-like C2-type domains follow at residues 1084–1172 and 1225–1313; these read PSFT…CKVL and PQIT…VNLT. An IIA-3 repeat occupies 1107–1123; it reads ISSDPPASVSWTLDSKA. The stretch at 1140 to 1156 is one IIB-3 repeat; the sequence is SLTIEKVMPEDGGEYKC. The interval 1180 to 1227 is disordered; sequence KAAKPAEKKTKKPKTTLPPVLSTESSEATVKKKPAPKTPPKAATPPQI. Residues 1209 to 1226 form an III-4 repeat; sequence VKKKPAPKTPPKAATPPQ. The IIB-4 repeat unit spans residues 1281 to 1297; sequence KLTISSTKQEHCGCYTL. Residues 1317–1364 are motif IA; the sequence is KPDPPAGTPCASDIRSSSLTLSWYGSSYDGGSAVQSYTVEIWNSVDNK. The Fibronectin type-III domain occupies 1321 to 1414; that stretch reads PAGTPCASDI…ESEVVKVGEK (94 aa). The interval 1385–1402 is motif IB; that stretch reads REYKFRVRAANVYGISEP. The interval 1414-1433 is disordered; that stretch reads KQEEELKEEEAELSDDEGKE. The segment covering 1415-1432 has biased composition (acidic residues); that stretch reads QEEELKEEEAELSDDEGK. The Protein kinase domain maps to 1453 to 1708; sequence YNIEERLGSG…CTQCLQHPWL (256 aa). ATP-binding positions include 1459 to 1467 and lysine 1482; that span reads LGSGKFGQV. Residue aspartate 1574 is the Proton acceptor of the active site. The interval 1700-1763 is calmodulin-binding; that stretch reads TQCLQHPWLQ…SGMSGRKASG (64 aa). The calmodulin autoinhibition (AM13) region stretch occupies residues 1716–1728; that stretch reads EAKKLSKDRMKKY. The calmodulin recognition (RS20) region stretch occupies residues 1730 to 1749; that stretch reads ARRKWQKTGHAVRAIGRLSS. A Phosphoserine; by PKG modification is found at serine 1762. At serine 1768 the chain carries Phosphoserine; by MAPK. One can recognise an Ig-like C2-type 9 domain in the interval 1794 to 1885; sequence PYFTKTILDM…ATCTAELLVE (92 aa). One copy of the IIA-4 repeat lies at 1817–1833; the sequence is IEGYPDPEVMWYKDDQP. An IIB-5 repeat occupies 1851–1866; it reads SLTISEVCGDDDAKYT. Positions 1885–1906 are disordered; sequence ETMGKEGEGEGEGEEDEEEEEE. The segment covering 1893–1906 has biased composition (acidic residues); sequence GEGEGEEDEEEEEE.

This sequence belongs to the protein kinase superfamily. CAMK Ser/Thr protein kinase family. As to quaternary structure, all isoforms including Telokin bind calmodulin. The cofactor is Mg(2+). Ca(2+) serves as cofactor. The C-terminus is deglutamylated, leading to the formation of Myosin light chain kinase, smooth muscle, deglutamylated form. The C-terminus is variable, with one to five C-terminal glutamyl residues being removed producing five forms differring in their number of C-terminal glutamyl residues. Post-translationally, acetylated. In terms of processing, phosphorylation of telokin by PKG has no significant effect on its myosin binding activity, but promotes translocation to the membrane. As to expression, isoform telokin is expressed in gizzard, heart, lung, intestine, and skeletal muscle although the levels of the expression in the latter were much less than that in the gizzard.

The protein localises to the cytoplasm. Its subcellular location is the cytosol. The protein resides in the membrane. It carries out the reaction L-seryl-[myosin light chain] + ATP = O-phospho-L-seryl-[myosin light chain] + ADP + H(+). The catalysed reaction is L-threonyl-[myosin light chain] + ATP = O-phospho-L-threonyl-[myosin light chain] + ADP + H(+). With respect to regulation, activated by phosphorylation on Tyr-478. Isoforms which lack this tyrosine residue are not regulated in this way. All catalytically active isoforms require binding to calcium and calmodulin for activation. Functionally, phosphorylates a specific serine in the N-terminus of a myosin light chain, which leads to the formation of calmodulin/MLCK signal transduction complexes which allow selective transduction of calcium signals. This chain is Myosin light chain kinase, smooth muscle (Mylk), found in Gallus gallus (Chicken).